The following is a 371-amino-acid chain: tRNA-specific 2-thiouridylase MnmA (371 aa).

Residues 13–20 (GMSGGVDS) and Met-39 each bind ATP. The interval 99–101 (NPD) is interaction with target base in tRNA. The active-site Nucleophile is the Cys-104. An intrachain disulfide couples Cys-104 to Cys-200. ATP is bound at residue Gly-128. The segment at 150 to 152 (KDQ) is interaction with tRNA. Catalysis depends on Cys-200, which acts as the Cysteine persulfide intermediate. Residues 308-309 (RY) form an interaction with tRNA region.

The protein belongs to the MnmA/TRMU family.

The protein localises to the cytoplasm. The catalysed reaction is S-sulfanyl-L-cysteinyl-[protein] + uridine(34) in tRNA + AH2 + ATP = 2-thiouridine(34) in tRNA + L-cysteinyl-[protein] + A + AMP + diphosphate + H(+). Catalyzes the 2-thiolation of uridine at the wobble position (U34) of tRNA, leading to the formation of s(2)U34. This Bacillus cereus (strain ATCC 10987 / NRS 248) protein is tRNA-specific 2-thiouridylase MnmA.